The following is a 180-amino-acid chain: MGGVLSYFRGLLGSREMRILILGLDGAGKTTILYRLQVGEVVTTIPTIGFNVEQVTYKNLKFQVWDLGGQTSIRPYWRCYYSNTDAIIYVVDSADRDRIGISKDELLYMLREEELAGAILVVLANKQDMDGCMTVAEVHHALGLENLKNRTFQIFKTSATKGEGLDQAMDWLSNTLQSRK.

A lipid anchor (N-myristoyl glycine) is attached at Gly2. Residues 23–30 (GLDGAGKT), 66–70 (DLGGQ), and 125–128 (NKQD) each bind GTP.

It belongs to the small GTPase superfamily. Arf family.

Functionally, GTP-binding protein involved in protein trafficking; may modulate vesicle budding and uncoating within the Golgi apparatus. This chain is ADP-ribosylation factor-like protein 1 (Arl1), found in Drosophila melanogaster (Fruit fly).